A 141-amino-acid polypeptide reads, in one-letter code: MAIERTLSIIKPDAVAKNVIGQIYSRFENAGLKIVASRMVHLSRADAEKFYAVHAARPFFKDLVEFMISGPVQVQVLEGEGAILKNRDLMGATDPKKAEKGTIRADFADSIDANAVHGSDAPETAAVEVAFFFPEVNVYSR.

6 residues coordinate ATP: lysine 11, phenylalanine 59, arginine 87, threonine 93, arginine 104, and asparagine 114. Histidine 117 (pros-phosphohistidine intermediate) is an active-site residue.

The protein belongs to the NDK family. In terms of assembly, homotetramer. Mg(2+) serves as cofactor.

The protein localises to the cytoplasm. It carries out the reaction a 2'-deoxyribonucleoside 5'-diphosphate + ATP = a 2'-deoxyribonucleoside 5'-triphosphate + ADP. The enzyme catalyses a ribonucleoside 5'-diphosphate + ATP = a ribonucleoside 5'-triphosphate + ADP. Major role in the synthesis of nucleoside triphosphates other than ATP. The ATP gamma phosphate is transferred to the NDP beta phosphate via a ping-pong mechanism, using a phosphorylated active-site intermediate. The protein is Nucleoside diphosphate kinase of Paraburkholderia phymatum (strain DSM 17167 / CIP 108236 / LMG 21445 / STM815) (Burkholderia phymatum).